A 1522-amino-acid chain; its full sequence is Adhesion G protein-coupled receptor B3 (1522 aa).

An N-terminal signal peptide occupies residues 1–25 (MKAVRNLLIYIFSTYLLVMFGFNAA). The Extracellular segment spans residues 26–880 (QDFWCSTLVK…MESSGTPSVT (855 aa)). The CUB domain maps to 30–159 (CSTLVKGVIY…KSFFEFLVLN (130 aa)). Residues Asn-51, Asn-54, Asn-82, Asn-105, and Asn-241 are each glycosylated (N-linked (GlcNAc...) asparagine). TSP type-1 domains follow at residues 291–343 (ESGV…ALCP), 345–398 (HGVW…ALCP), 400–453 (DGQW…PECT), and 455–508 (NGQW…QRCP). Cystine bridges form between Cys-303–Cys-336, Cys-307–Cys-342, Cys-318–Cys-326, Cys-357–Cys-392, Cys-361–Cys-397, Cys-372–Cys-382, Cys-412–Cys-447, Cys-416–Cys-452, Cys-427–Cys-437, Cys-467–Cys-502, Cys-471–Cys-507, Cys-482–Cys-492, Cys-514–Cys-549, and Cys-537–Cys-567. N-linked (GlcNAc...) asparagine glycosylation occurs at Asn-337. The N-linked (GlcNAc...) asparagine glycan is linked to Asn-418. N-linked (GlcNAc...) asparagine glycosylation occurs at Asn-540. Ser-619 bears the Phosphoserine mark. Asn-625, Asn-779, Asn-812, and Asn-828 each carry an N-linked (GlcNAc...) asparagine glycan. One can recognise a GAIN-B domain in the interval 693-869 (QNSYLMTGNV…AILAQQPREI (177 aa)). Cystine bridges form between Cys-819-Cys-851 and Cys-839-Cys-853. A GPS region spans residues 819–869 (CVLWDDSKSNESLGTWSTQGCKTVLTDASHTKCLCDRLSTFAILAQQPREI). Residues 881–901 (LIVGSGLSCLALITLAVVYAA) traverse the membrane as a helical segment. Topologically, residues 902–910 (LWRYIRSER) are cytoplasmic. Residues 911-931 (SIILINFCLSIISSNILILVG) form a helical membrane-spanning segment. Residues 932–939 (QTQTHNKS) lie on the Extracellular side of the membrane. Asn-937 carries an N-linked (GlcNAc...) asparagine glycan. Residues 940 to 960 (ICTTTTAFLHFFFLASFCWVL) traverse the membrane as a helical segment. Residues 961–981 (TEAWQSYMAVTGKIRTRLIRK) lie on the Cytoplasmic side of the membrane. The helical transmembrane segment at 982–1002 (RFLCLGWGLPALVVATSVGFT) threads the bilayer. Residues 1003-1023 (RTKGYGTDHYCWLSLEGGLLY) lie on the Extracellular side of the membrane. Residues 1024–1044 (AFVGPAAAVVLVNMVIGILVF) traverse the membrane as a helical segment. At 1045 to 1098 (NKLVSRDGILDKKLKHRAGQMSEPHSGLTLKCAKCGVVSTTALSATTASNAMAS) the chain is on the cytoplasmic side. A helical membrane pass occupies residues 1099–1119 (LWSSCVVLPLLALTWMSAVLA). Topologically, residues 1120–1125 (MTDKRS) are extracellular. The chain crosses the membrane as a helical span at residues 1126 to 1146 (ILFQILFAVFDSLQGFVIVMV). Residues 1147-1522 (HCILRREVQD…VQEGDFQTEV (376 aa)) are Cytoplasmic-facing. Phosphoserine is present on residues Ser-1220 and Ser-1411.

This sequence belongs to the G-protein coupled receptor 2 family. Adhesion G-protein coupled receptor (ADGR) subfamily. As to quaternary structure, forms a heterodimer, consisting of a large extracellular region non-covalently linked to a seven-transmembrane moiety. Interacts (via its TSRs) with C1QL1, C1QL2, C1QL3 and C1QL4. Interacts via (C-terminus) with ELMO1, ELMO2 and ELMO3. In terms of processing, the endogenous protein is proteolytically cleaved into 2 subunits, an extracellular subunit and a seven-transmembrane subunit. In terms of tissue distribution, brain-specific expression.

The protein localises to the cell membrane. Its function is as follows. Receptor that plays a role in the regulation of synaptogenesis and dendritic spine formation at least partly via interaction with ELMO1 and RAC1 activity. Promotes myoblast fusion through ELMO/DOCK1. The sequence is that of Adhesion G protein-coupled receptor B3 (Adgrb3) from Mus musculus (Mouse).